A 1374-amino-acid polypeptide reads, in one-letter code: DNA-directed RNA polymerase subunit beta (1374 aa).

It belongs to the RNA polymerase beta chain family. The RNAP catalytic core consists of 2 alpha, 1 beta, 1 beta' and 1 omega subunit. When a sigma factor is associated with the core the holoenzyme is formed, which can initiate transcription.

The catalysed reaction is RNA(n) + a ribonucleoside 5'-triphosphate = RNA(n+1) + diphosphate. DNA-dependent RNA polymerase catalyzes the transcription of DNA into RNA using the four ribonucleoside triphosphates as substrates. The chain is DNA-directed RNA polymerase subunit beta from Rhodopseudomonas palustris (strain TIE-1).